An 88-amino-acid polypeptide reads, in one-letter code: Small ribosomal subunit protein uS17 (88 aa).

It belongs to the universal ribosomal protein uS17 family. Part of the 30S ribosomal subunit.

Functionally, one of the primary rRNA binding proteins, it binds specifically to the 5'-end of 16S ribosomal RNA. In Pseudomonas entomophila (strain L48), this protein is Small ribosomal subunit protein uS17.